The chain runs to 472 residues: Methanethiol oxidase (472 aa).

The protein belongs to the selenium-binding protein family.

The protein localises to the nucleus. Its subcellular location is the cytoplasm. The protein resides in the cytosol. It is found in the membrane. It carries out the reaction methanethiol + O2 + H2O = hydrogen sulfide + formaldehyde + H2O2 + H(+). Its pathway is organosulfur degradation. Its function is as follows. Catalyzes the oxidation of methanethiol, an organosulfur compound known to be produced in substantial amounts by gut bacteria. Selenium-binding protein which may be involved in the sensing of reactive xenobiotics in the cytoplasm. May be involved in intra-Golgi protein transport. The sequence is that of Methanethiol oxidase (selenbp1-b) from Xenopus laevis (African clawed frog).